We begin with the raw amino-acid sequence, 351 residues long: UDP-N-acetylglucosamine--N-acetylmuramyl-(pentapeptide) pyrophosphoryl-undecaprenol N-acetylglucosamine transferase (351 aa).

UDP-N-acetyl-alpha-D-glucosamine-binding positions include 12 to 14 (TGG), Asn-124, Arg-160, Ser-188, Ile-239, 258 to 263 (ALTVCE), and Gln-283.

The protein belongs to the glycosyltransferase 28 family. MurG subfamily.

It is found in the cell inner membrane. It carries out the reaction di-trans,octa-cis-undecaprenyl diphospho-N-acetyl-alpha-D-muramoyl-L-alanyl-D-glutamyl-meso-2,6-diaminopimeloyl-D-alanyl-D-alanine + UDP-N-acetyl-alpha-D-glucosamine = di-trans,octa-cis-undecaprenyl diphospho-[N-acetyl-alpha-D-glucosaminyl-(1-&gt;4)]-N-acetyl-alpha-D-muramoyl-L-alanyl-D-glutamyl-meso-2,6-diaminopimeloyl-D-alanyl-D-alanine + UDP + H(+). It participates in cell wall biogenesis; peptidoglycan biosynthesis. In terms of biological role, cell wall formation. Catalyzes the transfer of a GlcNAc subunit on undecaprenyl-pyrophosphoryl-MurNAc-pentapeptide (lipid intermediate I) to form undecaprenyl-pyrophosphoryl-MurNAc-(pentapeptide)GlcNAc (lipid intermediate II). This Actinobacillus pleuropneumoniae serotype 7 (strain AP76) protein is UDP-N-acetylglucosamine--N-acetylmuramyl-(pentapeptide) pyrophosphoryl-undecaprenol N-acetylglucosamine transferase.